A 120-amino-acid chain; its full sequence is Large ribosomal subunit protein uL22 (120 aa).

It belongs to the universal ribosomal protein uL22 family. Part of the 50S ribosomal subunit.

This protein binds specifically to 23S rRNA; its binding is stimulated by other ribosomal proteins, e.g. L4, L17, and L20. It is important during the early stages of 50S assembly. It makes multiple contacts with different domains of the 23S rRNA in the assembled 50S subunit and ribosome. Its function is as follows. The globular domain of the protein is located near the polypeptide exit tunnel on the outside of the subunit, while an extended beta-hairpin is found that lines the wall of the exit tunnel in the center of the 70S ribosome. This chain is Large ribosomal subunit protein uL22, found in Corynebacterium glutamicum (strain R).